The chain runs to 327 residues: Protein hunchback (327 aa).

C2H2-type zinc fingers lie at residues 1–5, 11–33, and 39–63; these read HMRNH, FQCS…LKSH, and YRCA…KYQH. Disordered stretches follow at residues 91 to 121, 143 to 170, and 182 to 290; these read KQKP…HPIF, PPNN…MSPP, and ERPL…EVAS. Basic and acidic residues-rich tracts occupy residues 205-216 and 265-276; these read THREMPTEHGDD and LQHEDEKMRDAD. C2H2-type zinc fingers lie at residues 297 to 319 and 325 to 327; these read YTCQ…MGFH and FMC.

Belongs to the hunchback C2H2-type zinc-finger protein family.

It localises to the nucleus. In terms of biological role, gap class segmentation protein that controls development of head structures. The sequence is that of Protein hunchback (hb) from Manduca sexta (Tobacco hawkmoth).